Reading from the N-terminus, the 972-residue chain is Isoleucine--tRNA ligase (972 aa).

The 'HIGH' region motif lies at 63 to 73 (PYANGNIHIGH). Glu-603 serves as a coordination point for L-isoleucyl-5'-AMP. A 'KMSKS' region motif is present at residues 644–648 (KMSKS). Residue Lys-647 coordinates ATP.

It belongs to the class-I aminoacyl-tRNA synthetase family. IleS type 1 subfamily. In terms of assembly, monomer.

The protein resides in the cytoplasm. The enzyme catalyses tRNA(Ile) + L-isoleucine + ATP = L-isoleucyl-tRNA(Ile) + AMP + diphosphate. Functionally, catalyzes the attachment of isoleucine to tRNA(Ile). As IleRS can inadvertently accommodate and process structurally similar amino acids such as valine, to avoid such errors it has two additional distinct tRNA(Ile)-dependent editing activities. One activity is designated as 'pretransfer' editing and involves the hydrolysis of activated Val-AMP. The other activity is designated 'posttransfer' editing and involves deacylation of mischarged Val-tRNA(Ile). The chain is Isoleucine--tRNA ligase from Brucella abortus (strain 2308).